Consider the following 355-residue polypeptide: MKIDILSLFPEYFDSPLRSSILGRAIKRGLLDIQSRDIREFGLGKWKQVDDAPFNHDGMLLMAEPVVKAIRHVKRSDSKVVYLSPQGQLLTAKKSRELAQCSHLIFLCGHYEGIDERALESEVDEEISIGDYVLTNGGIAALVVIDALSRFIPGVLGNQESADKDSMENGLLEGPQYTRPRVFEGREVPEVLLHGDHQAIAKWRKQISLDRTRERRPDLYIRYLYDRENEEVTQQETDLKQSMLEGESAVILEVEDLHRSRKFYSKMFRLNQPVNNRLHIPGKTQMTIHLQEVGLKSKNIVLLSLRLGCKDDFFSFLGRWKMLGGTLEQADDRGEVRLVRDFDGHVWAISCKQAE.

S-adenosyl-L-methionine contacts are provided by residues glycine 109 and 129–134 (IGDYVL).

Belongs to the RNA methyltransferase TrmD family. As to quaternary structure, homodimer.

It localises to the cytoplasm. The catalysed reaction is guanosine(37) in tRNA + S-adenosyl-L-methionine = N(1)-methylguanosine(37) in tRNA + S-adenosyl-L-homocysteine + H(+). Functionally, specifically methylates guanosine-37 in various tRNAs. In Chlamydia abortus (strain DSM 27085 / S26/3) (Chlamydophila abortus), this protein is tRNA (guanine-N(1)-)-methyltransferase.